A 713-amino-acid chain; its full sequence is Cyclomaltodextrin glucanotransferase (713 aa).

Positions 1–27 (MKRFMKLTAVWTLWLSLTLGLLSPVHA) are cleaved as a signal peptide. The A1 stretch occupies residues 28–165 (APDTSVSNKQ…NIKVIIDFAP (138 aa)). Ca(2+)-binding residues include aspartate 54, asparagine 56, asparagine 59, and asparagine 60. Cysteine 70 and cysteine 77 are joined by a disulfide. Positions 78 and 80 each coordinate Ca(2+). Position 127–128 (127–128 (YW)) interacts with substrate. Asparagine 166 is a Ca(2+) binding site. A b region spans residues 166–229 (NHTSPASSDD…NLYDLADLNH (64 aa)). Substrate is bound at residue histidine 167. Isoleucine 217 serves as a coordination point for Ca(2+). Position 220-223 (220-223 (NLYD)) interacts with substrate. Aspartate 226 contributes to the Ca(2+) binding site. Residues 230 to 433 (NNSSVDVYLK…LRKSNPAIAY (204 aa)) are A2. Arginine 254 serves as a coordination point for substrate. Aspartate 256 (nucleophile) is an active-site residue. Residue 259–260 (KH) participates in substrate binding. Histidine 260 contributes to the Ca(2+) binding site. Glutamate 284 functions as the Proton donor in the catalytic mechanism. Substrate contacts are provided by histidine 354, aspartate 398, and arginine 402. The segment at 434–522 (GSTHERWINN…GTAVWQYTTD (89 aa)) is c. The segment at 523–609 (ATTPIIGNVG…SNIYDNFEVL (87 aa)) is d. One can recognise an IPT/TIG domain in the interval 526–607 (PIIGNVGPMM…AASNIYDNFE (82 aa)). A CBM20 domain is found at 608-713 (VLTGDQVTVR…TATVNVNWQP (106 aa)). The tract at residues 610-713 (TGDQVTVRFV…TATVNVNWQP (104 aa)) is e.

It belongs to the glycosyl hydrolase 13 family. In terms of assembly, monomer. The cofactor is Ca(2+).

The protein resides in the secreted. The catalysed reaction is Cyclizes part of a (1-&gt;4)-alpha-D-glucan chain by formation of a (1-&gt;4)-alpha-D-glucosidic bond.. This chain is Cyclomaltodextrin glucanotransferase (cgt), found in Bacillus sp. (strain 1011).